The sequence spans 325 residues: MASSSCFLRSILFSSPTNLRSNHHLPTFFPKNYLICSHSTSSRFESLSVSSIGTGSTKKSSDTRRKVKSMATTNIGKEEKKRVEIYDLEENLVIDLAKFTADLSDKFCKERGAFTVVVSGGSLIKSLRKLVESPYVDSIDWARWHFFWVDERVVPKNHDDSNYKLAYDSFLSKVPIPPGNVYAINEALSAEAAADDYETCLKHLVNTNILRVSESTGFPKFDLMLLGMGPDGHVASLFPGHGLCNESKKWVVSISDSPKPPSERITFTFPVINSSAHVALVVCGSGKAEAVEAALKKTGNVPPAGSVSAEDELVWFLDKPASSKL.

The transit peptide at 1–68 (MASSSCFLRS…KSSDTRRKVK (68 aa)) directs the protein to the chloroplast. The interval 51 to 73 (SIGTGSTKKSSDTRRKVKSMATT) is disordered. The short motif at 323–325 (SKL) is the Microbody targeting signal element.

Belongs to the glucosamine/galactosamine-6-phosphate isomerase family. 6-phosphogluconolactonase subfamily. As to quaternary structure, interacts with TRXM2. In terms of tissue distribution, expressed in roots, leaves and shoots.

Its subcellular location is the plastid. It is found in the chloroplast. It localises to the peroxisome. It catalyses the reaction 6-phospho-D-glucono-1,5-lactone + H2O = 6-phospho-D-gluconate + H(+). The protein operates within carbohydrate degradation; pentose phosphate pathway; D-ribulose 5-phosphate from D-glucose 6-phosphate (oxidative stage): step 2/3. Functionally, catalyzes the hydrolysis of 6-phosphogluconolactone to 6-phosphogluconate. Involved in the regulation of cellular redox state; enzymatic activity is required for this function. Required for sugar-dependent expression of nitrate assimilation genes in the nucleus of root cells. In Arabidopsis thaliana (Mouse-ear cress), this protein is 6-phosphogluconolactonase 3, chloroplastic.